The chain runs to 694 residues: Follicle-stimulating hormone receptor (694 aa).

The N-terminal stretch at 1 to 17 is a signal peptide; sequence MALLLVSLLAFLGSGAG. Intrachain disulfides connect Cys-18–Cys-25 and Cys-23–Cys-32. Residues 18–46 enclose the LRRNT domain; sequence CHHWLCHCSDRVFLCQDSKVTEIPPDLPR. Residues 18-365 lie on the Extracellular side of the membrane; the sequence is CHHWLCHCSD…EDIMGYNILR (348 aa). LRR repeat units follow at residues 49–72, 73–97, 98–118, 119–143, 144–169, 170–192, 193–216, 217–240, and 241–259; these read IELR…FKDL, EKIE…LPKL, HEIR…AFQN, LPNL…KIQS, LQKV…MGLS, FDSL…AFNG, TQLD…VFRG, ASGP…GLEN, and LKKL…PSLD. Residues Asn-191 and Asn-199 are each glycosylated (N-linked (GlcNAc...) asparagine). Cystine bridges form between Cys-275–Cys-345, Cys-276–Cys-292, Cys-276–Cys-355, and Cys-292–Cys-337. N-linked (GlcNAc...) asparagine glycans are attached at residues Asn-293 and Asn-311. Residues 366–386 form a helical membrane-spanning segment; that stretch reads VLIWFISILAITGNITVLVIL. Over 387–397 the chain is Cytoplasmic; it reads TTSQYKLTVPR. The helical transmembrane segment at 398 to 420 threads the bilayer; the sequence is FLMCNLAFADLCIGIYLLPIASV. The Extracellular portion of the chain corresponds to 421 to 442; it reads DIHTKSQYHNYAIDWQTAVGCD. A disulfide bridge links Cys-441 with Cys-516. Residues 443–464 traverse the membrane as a helical segment; the sequence is AAGFFTAFASELSVYTLTAIPL. Residues 465-484 lie on the Cytoplasmic side of the membrane; it reads ERWHTITHAMQLERKVQLRH. The chain crosses the membrane as a helical span at residues 485–507; the sequence is AASVMVMGWVFAFAAALLPIFGV. At 508 to 527 the chain is on the extracellular side; the sequence is SSYMKVSICLPIDIDSPLSQ. A helical transmembrane segment spans residues 528 to 549; sequence LYVMALLVLNVLAFVVICGCYT. The Cytoplasmic segment spans residues 550-572; that stretch reads HIYLTVRNPNIVSSSSDTKIAKR. Residues 573 to 596 form a helical membrane-spanning segment; it reads MATLIFTDFLCMAPISLFAISASL. The Extracellular portion of the chain corresponds to 597–607; it reads KAPLITVSKAK. A helical membrane pass occupies residues 608-629; it reads ILLVLFYPINSCANPFLYAIFT. The Cytoplasmic segment spans residues 630-694; sequence KNFRRDFFIL…LVPLSQSAHN (65 aa).

Belongs to the G-protein coupled receptor 1 family. FSH/LSH/TSH subfamily. As to quaternary structure, homotrimer. Functions as a homotrimer binding the FSH hormone heterodimer composed of CGA and FSHB. Interacts with ARRB2. Interacts with APPL2; interaction is independent of follicle stimulating hormone stimulation. N-glycosylated; indirectly required for FSH-binding, possibly via a conformational change that allows high affinity binding of hormone.

The protein localises to the cell membrane. Its function is as follows. G protein-coupled receptor for follitropin, the follicle-stimulating hormone. Through cAMP production activates the downstream PI3K-AKT and ERK1/ERK2 signaling pathways. The sequence is that of Follicle-stimulating hormone receptor (FSHR) from Mesocricetus auratus (Golden hamster).